Here is a 154-residue protein sequence, read N- to C-terminus: Endoribonuclease YbeY (154 aa).

Histidine 113, histidine 117, and histidine 123 together coordinate Zn(2+).

Belongs to the endoribonuclease YbeY family. It depends on Zn(2+) as a cofactor.

It localises to the cytoplasm. Functionally, single strand-specific metallo-endoribonuclease involved in late-stage 70S ribosome quality control and in maturation of the 3' terminus of the 16S rRNA. This chain is Endoribonuclease YbeY, found in Ehrlichia chaffeensis (strain ATCC CRL-10679 / Arkansas).